Here is a 43-residue protein sequence, read N- to C-terminus: Oxygen-evolving enhancer protein 2 (43 aa).

Belongs to the PsbP family.

It localises to the plastid. Its subcellular location is the chloroplast thylakoid membrane. Its function is as follows. May be involved in the regulation of photosystem II. This Physcomitrium patens (Spreading-leaved earth moss) protein is Oxygen-evolving enhancer protein 2.